The primary structure comprises 1242 residues: Structural polyprotein (1242 aa).

The segment at 1 to 36 (MFPYPTLNYPPMAPVNPMAYRDPNPPRRRWRPFRPP) is necessary for nucleocapsid assembly and virus assembly. Positions 1–104 (MFPYPTLNYP…KQKPGKRQRM (104 aa)) are disordered. Residues 37–70 (LAAQIEDLRRSIANLTFKQRAPNPPAGPPAKRKK) are host transcription inhibition. A Supraphysiological nuclear export signal motif is present at residues 44–51 (LRRSIANL). The span at 66-104 (AKRKKPAPKPKPAAPKKKRQPPPAKKQKRKQKPGKRQRM) shows a compositional bias: basic residues. Positions 67-70 (KRKK) match the Nuclear localization signal motif. Positions 83-113 (KRQPPPAKKQKRKQKPGKRQRMCMKLESDKT) are binding to the viral RNA. The interval 98–112 (PGKRQRMCMKLESDK) is ribosome-binding. Ser110 is subject to Phosphoserine. Residues 112–261 (KTFPIMLNGQ…KDTPEGSEPW (150 aa)) enclose the Peptidase S3 domain. Position 113 is a phosphothreonine (Thr113). Residues His138, Asp160, and Ser212 each act as charge relay system in the active site. A functions as an uncleaved signal peptide for the precursor of protein E3/E2 region spans residues 262–273 (SLTTVMCVLANI). N-linked (GlcNAc...) asparagine; by host glycosylation is present at Asn272. Topologically, residues 325-688 (DLETHFTQYK…YYYNRYPMTT (364 aa)) are extracellular. Residues 689–709 (VIGLCTCVAIIMVSCVTSVWL) form a helical membrane-spanning segment. The Cytoplasmic portion of the chain corresponds to 710 to 744 (LCRTRNLCITPYRLAPNAQVPILLAVLCCVKPTRA). 3 S-palmitoyl cysteine; by host lipidation sites follow: Cys717, Cys737, and Cys738. Positions 717-737 (CITPYRLAPNAQVPILLAVLC) are transient transmembrane before p62-6K protein processing. At 745–759 (DDTLQVLNYLWNNNQ) the chain is on the extracellular side. A run of 2 helical transmembrane segments spans residues 760–780 (NFFW…MRML) and 781–801 (RCLL…GAAA). Topologically, residues 802–1218 (YEHAAVMPNK…WSWLKVLVGS (417 aa)) are extracellular. Cystine bridges form between Cys850-Cys915, Cys863-Cys895, Cys864-Cys897, Cys869-Cys879, Cys1061-Cys1073, Cys1103-Cys1178, Cys1108-Cys1182, and Cys1130-Cys1172. The interval 885–902 (VYPFMWGGAYCFCDTENT) is E1 fusion peptide loop. The helical transmembrane segment at 1219–1239 (TSAFIVLGLIATAVVALVLFT) threads the bilayer. Residues 1240-1242 (HRH) lie on the Cytoplasmic side of the membrane.

Part of a tetrameric complex composed of host CRM1, host importin alpha/beta dimer and the viral capsid; this complex blocks the receptor-mediated transport through the nuclear pore. Interacts with host phosphatase PPP1CA; this interaction dephosphorylates the capsid protein, which increases its ability to bind to the viral genome. Interacts with host karyopherin KPNA4; this interaction allows the nuclear import of the viral capsid protein. Interacts with spike glycoprotein E2. Interacts with host IRAK1; the interaction leads to inhibition of IRAK1-dependent signaling. As to quaternary structure, the precursor of protein E3/E2 and E1 form a heterodimer shortly after synthesis. In terms of assembly, the precursor of protein E3/E2 and E1 form a heterodimer shortly after synthesis. Processing of the precursor of protein E3/E2 into E2 and E3 results in a heterodimer of the spike glycoproteins E2 and E1. Spike at virion surface are constituted of three E2-E1 heterodimers. After target cell attachment and endocytosis, E1 change conformation to form homotrimers. Interacts with 6K protein. Processing of the precursor of protein E3/E2 into E2 and E3 results in a heterodimer of the spike glycoproteins E2 and E1. Spike at virion surface are constituted of three E2-E1 heterodimers. Interacts with 6K protein. As to quaternary structure, interacts with spike glycoprotein E1. Interacts with spike glycoprotein E2. Structural polyprotein: Specific enzymatic cleavages in vivo yield mature proteins. Capsid protein is auto-cleaved during polyprotein translation, unmasking a signal peptide at the N-terminus of the precursor of E3/E2. The remaining polyprotein is then targeted to the host endoplasmic reticulum, where host signal peptidase cleaves it into pE2, 6K and E1 proteins. pE2 is further processed to mature E3 and E2 by host furin in trans-Golgi vesicle. In terms of processing, phosphorylated on serine and threonine residues. Post-translationally, palmitoylated via thioester bonds. These palmitoylations may induce disruption of the C-terminus transmembrane. This would result in the reorientation of E2 C-terminus from lumenal to cytoplasmic side. N-glycosylated. In terms of processing, palmitoylated via thioester bonds.

It is found in the virion. Its subcellular location is the host cytoplasm. The protein localises to the host cell membrane. It localises to the host nucleus. The protein resides in the virion membrane. It carries out the reaction Autocatalytic release of the core protein from the N-terminus of the togavirus structural polyprotein by hydrolysis of a -Trp-|-Ser- bond.. Functionally, forms an icosahedral capsid with a T=4 symmetry composed of 240 copies of the capsid protein surrounded by a lipid membrane through which penetrate 80 spikes composed of trimers of E1-E2 heterodimers. The capsid protein binds to the viral RNA genome at a site adjacent to a ribosome binding site for viral genome translation following genome release. Possesses a protease activity that results in its autocatalytic cleavage from the nascent structural protein. Following its self-cleavage, the capsid protein transiently associates with ribosomes, and within several minutes the protein binds to viral RNA and rapidly assembles into icosahedric core particles. The resulting nucleocapsid eventually associates with the cytoplasmic domain of the spike glycoprotein E2 at the cell membrane, leading to budding and formation of mature virions. In case of infection, new virions attach to target cells and after clathrin-mediated endocytosis their membrane fuses with the host endosomal membrane. This leads to the release of the nucleocapsid into the cytoplasm, followed by an uncoating event necessary for the genomic RNA to become accessible. The uncoating might be triggered by the interaction of capsid proteins with ribosomes. Binding of ribosomes would release the genomic RNA since the same region is genomic RNA-binding and ribosome-binding. Specifically inhibits interleukin-1 receptor-associated kinase 1/IRAK1-dependent signaling during viral entry, representing a means by which the alphaviruses may evade innate immune detection and activation prior to viral gene expression. Inhibits host transcription. Forms a tetrameric complex with XPO1/CRM1 and the nuclear import receptor importin. This complex blocks the central channel of host nuclear pores thereby inhibiting the receptor-mediated nuclear transport and thus the host mRNA and rRNA transcription. The inhibition of transcription is linked to a cytopathic effect on the host cell. Provides the signal sequence for the translocation of the precursor of protein E3/E2 to the host endoplasmic reticulum. Furin-cleaved E3 remains associated with spike glycoprotein E1 and mediates pH protection of the latter during the transport via the secretory pathway. After virion release from the host cell, the assembly protein E3 is gradually released in the extracellular space. Its function is as follows. Plays a role in viral attachment to target host cell, by binding to the cell receptor. Synthesized as a p62 precursor which is processed by furin at the cell membrane just before virion budding, giving rise to E2-E1 heterodimer. The p62-E1 heterodimer is stable, whereas E2-E1 is unstable and dissociate at low pH. p62 is processed at the last step, presumably to avoid E1 fusion activation before its final export to cell surface. E2 C-terminus contains a transitory transmembrane that would be disrupted by palmitoylation, resulting in reorientation of the C-terminal tail from lumenal to cytoplasmic side. This step is critical since E2 C-terminus is involved in budding by interacting with capsid proteins. This release of E2 C-terminus in cytoplasm occurs lately in protein export, and precludes premature assembly of particles at the endoplasmic reticulum membrane. In terms of biological role, constitutive membrane protein involved in virus glycoprotein processing, cell permeabilization, and the budding of viral particles. Disrupts the calcium homeostasis of the cell, probably at the endoplasmic reticulum level. This leads to cytoplasmic calcium elevation. Because of its lipophilic properties, the 6K protein is postulated to influence the selection of lipids that interact with the transmembrane domains of the glycoproteins, which, in turn, affects the deformability of the bilayer required for the extreme curvature that occurs as budding proceeds. Present in low amount in virions, about 3% compared to viral glycoproteins. Functionally, class II viral fusion protein. Fusion activity is inactive as long as E1 is bound to E2 in mature virion. After virus attachment to target cell and endocytosis, acidification of the endosome would induce dissociation of E1/E2 heterodimer and concomitant trimerization of the E1 subunits. This E1 trimer is fusion active, and promotes release of viral nucleocapsid in cytoplasm after endosome and viral membrane fusion. Efficient fusion requires the presence of cholesterol and sphingolipid in the target membrane. Fusion is optimal at levels of about 1 molecule of cholesterol per 2 molecules of phospholipids, and is specific for sterols containing a 3-beta-hydroxyl group. The polypeptide is Structural polyprotein (Aedes (Human)).